Consider the following 109-residue polypeptide: Oncomodulin (109 aa).

S2 carries the N-acetylserine modification. 2 EF-hand domains span residues 39 to 74 (MSAS…FESG) and 78 to 109 (LTES…MVHS). Ca(2+) contacts are provided by D52, D54, S56, Y58, E63, D91, D93, D95, K97, and E102.

This sequence belongs to the parvalbumin family. Abundant in the organ of Corti.

Has some calmodulin-like activity with respect to enzyme activation and growth regulation. Binds two calcium ions. The polypeptide is Oncomodulin (OCM) (Cavia porcellus (Guinea pig)).